The following is a 161-amino-acid chain: Endoribonuclease YbeY (161 aa).

Zn(2+) is bound by residues histidine 127, histidine 131, and histidine 137.

This sequence belongs to the endoribonuclease YbeY family. Zn(2+) serves as cofactor.

It is found in the cytoplasm. Its function is as follows. Single strand-specific metallo-endoribonuclease involved in late-stage 70S ribosome quality control and in maturation of the 3' terminus of the 16S rRNA. This is Endoribonuclease YbeY from Listeria welshimeri serovar 6b (strain ATCC 35897 / DSM 20650 / CCUG 15529 / CIP 8149 / NCTC 11857 / SLCC 5334 / V8).